Here is a 370-residue protein sequence, read N- to C-terminus: Apolipoprotein A-V (370 aa).

Positions 1-21 (MASMIALLTWALALLPALASA) are cleaved as a signal peptide. Position 59 is a phosphoserine (Ser59).

The protein belongs to the apolipoprotein A1/A4/E family. In terms of assembly, interacts with GPIHBP1. Interacts with SORL1; this interaction leads to APOA5 internalization and sorting either to lysosomes and degradation, or to the trans-Golgi network.

It is found in the secreted. It localises to the early endosome. Its subcellular location is the late endosome. The protein resides in the golgi apparatus. The protein localises to the trans-Golgi network. Minor apolipoprotein mainly associated with HDL and to a lesser extent with VLDL. May also be associated with chylomicrons. Important determinant of plasma triglyceride (TG) levels by both being a potent stimulator of apo-CII lipoprotein lipase (LPL) TG hydrolysis and an inhibitor of the hepatic VLDL-TG production rate (without affecting the VLDL-apoB production rate). Activates poorly lecithin:cholesterol acyltransferase (LCAT) and does not enhance efflux of cholesterol from macrophages. Binds heparin. The sequence is that of Apolipoprotein A-V (APOA5) from Acinonyx jubatus (Cheetah).